Reading from the N-terminus, the 372-residue chain is Pyruvylated Gal-beta-1,3-epitope synthesis protein 5 (372 aa).

Topologically, residues 1 to 12 (MGLPLRIFAGNG) are cytoplasmic. A helical; Signal-anchor for type II membrane protein membrane pass occupies residues 13 to 35 (IGGWCLRLFLFGSLILLLRPLIF). Topologically, residues 36 to 372 (YSNTTMKKLK…LRIIEQWKQL (337 aa)) are lumenal. 2 N-linked (GlcNAc...) asparagine glycosylation sites follow: N38 and N128.

Its subcellular location is the golgi apparatus membrane. Involved in cell wall biogenesis. Has a role in the addition of Gal-beta1,3 moeities to galactomannans and their subsequent pyruvylation. Has a role in meiosis. This Schizosaccharomyces pombe (strain 972 / ATCC 24843) (Fission yeast) protein is Pyruvylated Gal-beta-1,3-epitope synthesis protein 5 (pvg5).